A 502-amino-acid chain; its full sequence is RNA polymerase sigma factor sigA (502 aa).

The transit peptide at 1 to 23 directs the protein to the chloroplast; sequence MATAAVIGLNTGKRLLSSSFYHS. Residues 57–71 show a composition bias toward polar residues; it reads YSPSFPSSNRHTQSA. Residues 57-92 form a disordered region; sequence YSPSFPSSNRHTQSAKALKESVDVASTEKPWLPNGT. Threonine 170 carries the phosphothreonine modification. The Polymerase core binding motif lies at 287-300; it reads DLVQGGLIGLLRGI. A DNA-binding region (H-T-H motif) is located at residues 461-480; sequence WEDISKRIGLSRERVRQVGL.

It belongs to the sigma-70 factor family. Interacts with SIB1 in chloroplast. Binds to CSK. In terms of processing, the phosphorylation of Thr-170 mediated by oxidative conditions of plastoquinone (PQ) changes the promoter specificity, selectively inhibiting the transcription of the psaA gene, which encodes a PS-I protein. Phosphorylation of the holoenzyme occurs in the dark. This phosphorylation in response to plastoquinone redox state modification is mediated by CSK. Highly expressed in leaves, and to a lesser extent in roots. Expressed in old seedlings (8 days), cotyledons, hypocotyls, leaves, sepals and siliques.

It is found in the plastid. It localises to the chloroplast. Its function is as follows. Essential protein. Sigma factors are initiation factors that promote the attachment of plastid-encoded RNA polymerase (PEP) to specific initiation sites and are then released. Controls the transcription of the psaA gene and thus modulates photosystem stoichiometry. Thereby maintains a harmonious electron flow and photosynthetic efficiency. The chain is RNA polymerase sigma factor sigA (SIGA) from Arabidopsis thaliana (Mouse-ear cress).